The sequence spans 255 residues: uncharacterized protein (255 aa).

The protein belongs to the IIV-6 155L family.

This is an uncharacterized protein from Acheta domesticus (House cricket).